A 115-amino-acid chain; its full sequence is LSM complex subunit LSM7 (115 aa).

Over residues methionine 1–asparagine 10 the composition is skewed to basic and acidic residues. The interval methionine 1–lysine 23 is disordered. The region spanning glutamate 25 to serine 108 is the Sm domain.

The protein belongs to the snRNP Sm proteins family. In terms of assembly, component of the heptameric LSM1-LSM7 complex that forms a seven-membered ring structure with a donut shape. The LSm subunits are arranged in the order LSM1, LSM2, LSM3, LSM6, LSM5, LSM7 and LSM4. Except for LSM1, where a C-terminal helix crosses the ring structure to form additional interactions with LSM3 and LSM6, each subunit interacts only with its two neighboring subunits. The LSM1-LSM7 complex interacts with PAT1; within the complex PAT1 has direct interactions with LSM2 and LSM3. The LSM1-LSM7 complex interacts with XRN1. Component of the heptameric LSM2-LSM8 complex that forms a seven-membered ring structure with a donut shape; an RNA strand can pass through the hole in the center of the ring structure. The LSm subunits are arranged in the order LSM8, LSM2, LSM3, LSM6, LSM5, LSM7 and LSM4. Component of the spliceosome U4/U6-U5 tri-snRNP complex composed of the U4, U6 and U5 snRNAs and at least PRP3, PRP4, PRP6, PRP8, PRP18, PRP31, PRP38, SNU13, SNU23, SNU66, SNU114, SPP381, SMB1, SMD1, SMD2, SMD3, SMX2, SMX3, LSM2, LSM3, LSM4, LSM5, LSM6, LSM7, LSM8, BRR2 and DIB1. May be found in a complex comprising LSM2-LSM7 without LSM1 or LSM8; the complex associates with pre-P RNA and snoRNA SNR5.

Its subcellular location is the nucleus. The protein localises to the nucleolus. It is found in the cytoplasm. Functionally, component of LSm protein complexes, which are involved in RNA processing and may function in a chaperone-like manner. Component of the cytoplasmic LSM1-LSM7 complex which is involved in mRNA degradation by activating the decapping step. Together with PAT1, the LSM1-LSM7 complex binds to osmotic stress-activated mRNAs to attenuate the osmotic stress response, probably by limiting ribosome access to the mRNA and consequently translation. Component of the nuclear LSM2-LSM8 complex, which is involved in spliceosome assembly. The LSM2-LSM8 complex plays a role in the biogenesis of the spliceosomal U4/U6-U5 tri-snRNP complex by accelerating PRP24-mediated annealing of U4/U6 di-snRNA. The LSM2-LSM8 complex binds U6 snRNA terminating with a non-cyclic 3' phosphate group. LSM2-LSM8 is probably also involved in degradation of nuclear pre-mRNA by targeting them for decapping. LSM2-LSM8 could be involved in processing of pre-tRNAs, pre-rRNAs and U3 snoRNA, although involvement may be indirect. In a complex that probably contains LSM2-LSM7, but not LSM1 or LSM8, associates with the precursor of the RNA component of RNase P (pre-P RNA) and may be involved in maturing pre-P RNA; the complex also associates with snoRNA SNR5. The sequence is that of LSM complex subunit LSM7 (LSM7) from Saccharomyces cerevisiae (strain ATCC 204508 / S288c) (Baker's yeast).